A 392-amino-acid chain; its full sequence is MPLSNRRFNHKIKHALEARETQGLYRQRACLSRADQSVYHQGTSLLNFSSNDYLGLAQDPAILSAWQEGLTLFGAGSGASPLVTGFHSAHKALEDQLADWLGYDRALLFNSGFSANQAVLFTIPDKHDVLIQDKLNHASLMEAGLLSPATMRRFAHNDLSALTRLLHQTNDKFPSINPLVITEGVFSMDGDLSPLANISEQCSQHDAWLMVDDAHGCGVLGDKGRGSCDLAGVKADILIVTFGKAFGLSGAAVMCNNDTAEYLIQFARHFIYSTSMPPSQAHALSAACRLIQSDDWRREKLHDLGYLLFENVESSIQLVDTHTPIKPLIIGDSHKALSVSNALKAKGLWVSAIRPPTVPVNSARLRITLTAAHTEQDIKRLATTLNEVINDE.

Residue Arg26 participates in substrate binding. 112 to 113 is a binding site for pyridoxal 5'-phosphate; sequence GF. Residue His137 participates in substrate binding. Pyridoxal 5'-phosphate contacts are provided by Ser187, His215, and Thr241. Lys244 is subject to N6-(pyridoxal phosphate)lysine. Thr357 provides a ligand contact to substrate.

It belongs to the class-II pyridoxal-phosphate-dependent aminotransferase family. BioF subfamily. As to quaternary structure, homodimer. Requires pyridoxal 5'-phosphate as cofactor.

It carries out the reaction 6-carboxyhexanoyl-[ACP] + L-alanine + H(+) = (8S)-8-amino-7-oxononanoate + holo-[ACP] + CO2. It participates in cofactor biosynthesis; biotin biosynthesis. Functionally, catalyzes the decarboxylative condensation of pimeloyl-[acyl-carrier protein] and L-alanine to produce 8-amino-7-oxononanoate (AON), [acyl-carrier protein], and carbon dioxide. This is 8-amino-7-oxononanoate synthase from Photobacterium profundum (strain SS9).